We begin with the raw amino-acid sequence, 488 residues long: 1-aminocyclopropane-1-carboxylate synthase-like protein 1 (488 aa).

Position 273 is an N6-(pyridoxal phosphate)lysine (Lys273).

It belongs to the class-I pyridoxal-phosphate-dependent aminotransferase family. In terms of assembly, homodimer. Expressed in young leaves and flowers. Not expressed in roots.

This Arabidopsis thaliana (Mouse-ear cress) protein is 1-aminocyclopropane-1-carboxylate synthase-like protein 1 (ACS1).